The sequence spans 97 residues: Cell division topological specificity factor (97 aa).

The protein belongs to the MinE family.

Functionally, prevents the cell division inhibition by proteins MinC and MinD at internal division sites while permitting inhibition at polar sites. This ensures cell division at the proper site by restricting the formation of a division septum at the midpoint of the long axis of the cell. The sequence is that of Cell division topological specificity factor from Synechococcus sp. (strain RCC307).